Here is a 256-residue protein sequence, read N- to C-terminus: 1-(5-phosphoribosyl)-5-[(5-phosphoribosylamino)methylideneamino] imidazole-4-carboxamide isomerase (256 aa).

D8 acts as the Proton acceptor in catalysis. D129 (proton donor) is an active-site residue.

It belongs to the HisA/HisF family.

It localises to the cytoplasm. It carries out the reaction 1-(5-phospho-beta-D-ribosyl)-5-[(5-phospho-beta-D-ribosylamino)methylideneamino]imidazole-4-carboxamide = 5-[(5-phospho-1-deoxy-D-ribulos-1-ylimino)methylamino]-1-(5-phospho-beta-D-ribosyl)imidazole-4-carboxamide. Its pathway is amino-acid biosynthesis; L-histidine biosynthesis; L-histidine from 5-phospho-alpha-D-ribose 1-diphosphate: step 4/9. In Prochlorococcus marinus (strain NATL2A), this protein is 1-(5-phosphoribosyl)-5-[(5-phosphoribosylamino)methylideneamino] imidazole-4-carboxamide isomerase.